The sequence spans 901 residues: Pyruvate, phosphate dikinase (901 aa).

The segment at 1-321 (MNIAKSIHFL…WLIEQKPVEA (321 aa)) is N-terminal. The interval 322-380 (KSTISLVRLLLDLYEREVVDAEYVVKSVKPGQLNEILHPVIDMTSVTGLKSSQGGIIGV) is linker 1. Residues 381-482 (PGAAVGRVYF…TINEGDFVTL (102 aa)) form a central region. Residue Ser-440 is modified to Phosphoserine; by PDRP1. His-442 acts as the Tele-phosphohistidine intermediate in catalysis. Residues 483–522 (NVPYYGESTLYMGAAQLIEPDPETSGLVSFIELAKGFVRS) form a linker 2 region. The tract at residues 523–901 (FHVRANADSP…SAKSGGRRAR (379 aa)) is C-terminal. Substrate is bound by residues Arg-550, Arg-606, Glu-750, Gly-771, Thr-772, Asn-773, and Asp-774. Residue Glu-750 coordinates Mg(2+). Position 774 (Asp-774) interacts with Mg(2+). Residue Cys-835 is the Proton donor of the active site. Positions 879–901 (EKEGRKPAWRGRSSAKSGGRRAR) are disordered.

This sequence belongs to the PEP-utilizing enzyme family. As to quaternary structure, homodimer. The cofactor is Mg(2+). In terms of processing, phosphorylation of Ser-440 in the dark inactivates the enzyme. Dephosphorylation upon light stimulation reactivates the enzyme.

It carries out the reaction pyruvate + phosphate + ATP = phosphoenolpyruvate + AMP + diphosphate + H(+). Activated by light-induced dephosphorylation. Inhibited by dark-induced phosphorylation. Both reactions are catalyzed by PDRP1. Its function is as follows. Catalyzes the reversible phosphorylation of pyruvate and phosphate. This chain is Pyruvate, phosphate dikinase (ppdK), found in Treponema pallidum (strain Nichols).